A 494-amino-acid polypeptide reads, in one-letter code: Aspartyl/glutamyl-tRNA(Asn/Gln) amidotransferase subunit B (494 aa).

The protein belongs to the GatB/GatE family. GatB subfamily. In terms of assembly, heterotrimer of A, B and C subunits.

The enzyme catalyses L-glutamyl-tRNA(Gln) + L-glutamine + ATP + H2O = L-glutaminyl-tRNA(Gln) + L-glutamate + ADP + phosphate + H(+). It catalyses the reaction L-aspartyl-tRNA(Asn) + L-glutamine + ATP + H2O = L-asparaginyl-tRNA(Asn) + L-glutamate + ADP + phosphate + 2 H(+). Allows the formation of correctly charged Asn-tRNA(Asn) or Gln-tRNA(Gln) through the transamidation of misacylated Asp-tRNA(Asn) or Glu-tRNA(Gln) in organisms which lack either or both of asparaginyl-tRNA or glutaminyl-tRNA synthetases. The reaction takes place in the presence of glutamine and ATP through an activated phospho-Asp-tRNA(Asn) or phospho-Glu-tRNA(Gln). The chain is Aspartyl/glutamyl-tRNA(Asn/Gln) amidotransferase subunit B from Protochlamydia amoebophila (strain UWE25).